The primary structure comprises 510 residues: NAD(P)H-quinone oxidoreductase subunit 2 A, chloroplastic (510 aa).

The next 13 helical transmembrane spans lie at 24 to 44 (LLLF…GLIL), 57 to 77 (IPWL…ALLF), 99 to 119 (IFQF…VEYI), 124 to 144 (MALT…MFLC), 149 to 169 (LITI…LSGY), 183 to 203 (YLLM…WLYG), 227 to 247 (PGIS…LSPA), 295 to 315 (WHLL…LIAI), 323 to 343 (MLAY…IVGD), 354 to 374 (YMLF…LFGL), 395 to 415 (ALSL…AGFF), 418 to 438 (IYLF…IGLL), and 484 to 504 (MIVC…IITI).

Belongs to the complex I subunit 2 family. NDH is composed of at least 16 different subunits, 5 of which are encoded in the nucleus.

The protein resides in the plastid. It is found in the chloroplast thylakoid membrane. The enzyme catalyses a plastoquinone + NADH + (n+1) H(+)(in) = a plastoquinol + NAD(+) + n H(+)(out). It catalyses the reaction a plastoquinone + NADPH + (n+1) H(+)(in) = a plastoquinol + NADP(+) + n H(+)(out). Functionally, NDH shuttles electrons from NAD(P)H:plastoquinone, via FMN and iron-sulfur (Fe-S) centers, to quinones in the photosynthetic chain and possibly in a chloroplast respiratory chain. The immediate electron acceptor for the enzyme in this species is believed to be plastoquinone. Couples the redox reaction to proton translocation, and thus conserves the redox energy in a proton gradient. The sequence is that of NAD(P)H-quinone oxidoreductase subunit 2 A, chloroplastic from Spinacia oleracea (Spinach).